A 147-amino-acid chain; its full sequence is Hemoglobin subunit epsilon (147 aa).

In terms of domain architecture, Globin spans 3–147; sequence HWSAEEKQLI…VAHALARKYH (145 aa). Residues histidine 64 and histidine 93 each contribute to the heme b site.

Belongs to the globin family. Heterotetramer of two epsilon chains and two alpha chains. Hemoglobin E (Hbe) contains a alpha-A chains while hemoglobin M (Hbm) contains alpha-D chains.

In terms of biological role, beta-type chain found in early embryos. The protein is Hemoglobin subunit epsilon (HBE) of Gallus gallus (Chicken).